Here is a 360-residue protein sequence, read N- to C-terminus: Metalloendoproteinase 5-MMP (360 aa).

The N-terminal stretch at 1 to 20 is a signal peptide; sequence MRTLLLTILIFFFTVNPISA. A propeptide spans 21–142 (activation peptide); sequence KFYTNVSSIP…GGKILRTTEK (122 aa). Asn25, Asn36, and Asn78 each carry an N-linked (GlcNAc...) asparagine glycan. The Cysteine switch motif lies at 117–124; it reads PRCGNPDL. Cys119 lines the Zn(2+) pocket. Residues Asn168 and Asn191 are each glycosylated (N-linked (GlcNAc...) asparagine). Position 270 (His270) interacts with Zn(2+). The active site involves Glu271. Positions 274 and 280 each coordinate Zn(2+). The interval 312–336 is disordered; that stretch reads LYGGNPNGDGGGSKPSRESQSTGGD. The GPI-anchor amidated serine moiety is linked to residue Ser337. Positions 338–360 are cleaved as a propeptide — removed in mature form; sequence VRRWRGWMISLSSIATCIFLISV.

The protein belongs to the peptidase M10A family. Matrix metalloproteinases (MMPs) subfamily. Requires Zn(2+) as cofactor. Mostly expressed in leaves, roots and stems, and, to a lower extent, in flowers.

The protein localises to the cell membrane. Its activity is regulated as follows. Repressed by acetohydroxamic acid (AHA). Its function is as follows. Matrix metalloproteinases (MMPs) or matrixins may play a role in the degradation and remodeling of the extracellular matrix (ECM) during development or in response to stresses. Active on Mca-KESAbuNLFVLKDpaR-NH(2) (QF75) and, to some extent, on McaPLGLDpaAR-NH(2) (QF24), myelin basic protein (MBP) and beta-casein. The protein is Metalloendoproteinase 5-MMP of Arabidopsis thaliana (Mouse-ear cress).